The sequence spans 407 residues: Biotin synthase (407 aa).

One can recognise a Radical SAM core domain in the interval 47 to 277 (WFGRRVKLNY…DVEVRIAGGR (231 aa)). [4Fe-4S] cluster contacts are provided by Cys-65, Cys-69, and Cys-72. Cys-109, Cys-142, Cys-202, and Arg-272 together coordinate [2Fe-2S] cluster. The disordered stretch occupies residues 368–407 (GGGVCAPAPAATTPRPAEEPRTDLVAVRRRGAGTDLAPNA). Residues 373–382 (APAPAATTPR) show a composition bias toward low complexity.

Belongs to the radical SAM superfamily. Biotin synthase family. In terms of assembly, homodimer. Requires [4Fe-4S] cluster as cofactor. [2Fe-2S] cluster serves as cofactor.

It carries out the reaction (4R,5S)-dethiobiotin + (sulfur carrier)-SH + 2 reduced [2Fe-2S]-[ferredoxin] + 2 S-adenosyl-L-methionine = (sulfur carrier)-H + biotin + 2 5'-deoxyadenosine + 2 L-methionine + 2 oxidized [2Fe-2S]-[ferredoxin]. It participates in cofactor biosynthesis; biotin biosynthesis; biotin from 7,8-diaminononanoate: step 2/2. Catalyzes the conversion of dethiobiotin (DTB) to biotin by the insertion of a sulfur atom into dethiobiotin via a radical-based mechanism. The protein is Biotin synthase of Streptomyces coelicolor (strain ATCC BAA-471 / A3(2) / M145).